A 235-amino-acid chain; its full sequence is Large ribosomal subunit protein uL1 (235 aa).

This sequence belongs to the universal ribosomal protein uL1 family. As to quaternary structure, part of the 50S ribosomal subunit.

In terms of biological role, binds directly to 23S rRNA. The L1 stalk is quite mobile in the ribosome, and is involved in E site tRNA release. Its function is as follows. Protein L1 is also a translational repressor protein, it controls the translation of the L11 operon by binding to its mRNA. This is Large ribosomal subunit protein uL1 from Rhodospirillum centenum (strain ATCC 51521 / SW).